Reading from the N-terminus, the 127-residue chain is uncharacterized protein (127 aa).

The disordered stretch occupies residues 69–94; sequence GDGGSVPEKGKHGILGAQGQEHPGLN.

This is an uncharacterized protein from Homo sapiens (Human).